We begin with the raw amino-acid sequence, 133 residues long: uncharacterized protein (133 aa).

The 120-residue stretch at 9–128 (RILVYSDNVQ…VLGRTVLSLL (120 aa)) folds into the Response regulatory domain. At aspartate 64 the chain carries 4-aspartylphosphate.

This is an uncharacterized protein from Mycobacterium tuberculosis (strain CDC 1551 / Oshkosh).